Consider the following 351-residue polypeptide: DNA polymerase IV (351 aa).

A UmuC domain is found at 4-185; it reads IIHVDMDCFF…LPLAKIPGVG (182 aa). Mg(2+) is bound by residues aspartate 8 and aspartate 103. The active site involves glutamate 104.

It belongs to the DNA polymerase type-Y family. As to quaternary structure, monomer. Mg(2+) is required as a cofactor.

The protein localises to the cytoplasm. The catalysed reaction is DNA(n) + a 2'-deoxyribonucleoside 5'-triphosphate = DNA(n+1) + diphosphate. In terms of biological role, poorly processive, error-prone DNA polymerase involved in untargeted mutagenesis. Copies undamaged DNA at stalled replication forks, which arise in vivo from mismatched or misaligned primer ends. These misaligned primers can be extended by PolIV. Exhibits no 3'-5' exonuclease (proofreading) activity. May be involved in translesional synthesis, in conjunction with the beta clamp from PolIII. The protein is DNA polymerase IV of Escherichia coli (strain ATCC 8739 / DSM 1576 / NBRC 3972 / NCIMB 8545 / WDCM 00012 / Crooks).